Here is a 560-residue protein sequence, read N- to C-terminus: Glucose-6-phosphate isomerase, cytosolic (560 aa).

The residue at position 2 (Ala-2) is an N-acetylalanine. Glu-361 acts as the Proton donor in catalysis. Catalysis depends on residues His-392 and Lys-517.

The protein belongs to the GPI family. As to quaternary structure, homodimer.

It localises to the cytoplasm. The catalysed reaction is alpha-D-glucose 6-phosphate = beta-D-fructose 6-phosphate. It participates in carbohydrate degradation; glycolysis; D-glyceraldehyde 3-phosphate and glycerone phosphate from D-glucose: step 2/4. The sequence is that of Glucose-6-phosphate isomerase, cytosolic (PGIC) from Arabidopsis lyrata subsp. petraea (Northern rock-cress).